Here is a 229-residue protein sequence, read N- to C-terminus: Heptaprenylglyceryl phosphate synthase (229 aa).

Residue Lys12 coordinates sn-glycerol 1-phosphate. Mg(2+)-binding residues include Asp14 and Ser40. Sn-glycerol 1-phosphate-binding positions include 159 to 164 (YLEYSG), Gly189, and 209 to 210 (GN).

This sequence belongs to the GGGP/HepGP synthase family. Group I subfamily. Homodimer. Mg(2+) is required as a cofactor.

The catalysed reaction is sn-glycerol 1-phosphate + all-trans-heptaprenyl diphosphate = 3-heptaprenyl-sn-glycero-1-phosphate + diphosphate. Its pathway is membrane lipid metabolism; glycerophospholipid metabolism. Prenyltransferase that catalyzes in vivo the transfer of the heptaprenyl moiety of heptaprenyl pyrophosphate (HepPP; 35 carbon atoms) to the C3 hydroxyl of sn-glycerol-1-phosphate (G1P), producing heptaprenylglyceryl phosphate (HepGP). This reaction is an ether-bond-formation step in the biosynthesis of archaea-type G1P-based membrane lipids found in Bacillales. The chain is Heptaprenylglyceryl phosphate synthase from Bacillus thuringiensis (strain Al Hakam).